The primary structure comprises 181 residues: Protein GrpE (181 aa).

The protein belongs to the GrpE family. As to quaternary structure, homodimer.

Its subcellular location is the cytoplasm. In terms of biological role, participates actively in the response to hyperosmotic and heat shock by preventing the aggregation of stress-denatured proteins, in association with DnaK and GrpE. It is the nucleotide exchange factor for DnaK and may function as a thermosensor. Unfolded proteins bind initially to DnaJ; upon interaction with the DnaJ-bound protein, DnaK hydrolyzes its bound ATP, resulting in the formation of a stable complex. GrpE releases ADP from DnaK; ATP binding to DnaK triggers the release of the substrate protein, thus completing the reaction cycle. Several rounds of ATP-dependent interactions between DnaJ, DnaK and GrpE are required for fully efficient folding. The chain is Protein GrpE from Leptothrix cholodnii (strain ATCC 51168 / LMG 8142 / SP-6) (Leptothrix discophora (strain SP-6)).